A 215-amino-acid polypeptide reads, in one-letter code: Chloramphenicol acetyltransferase (215 aa).

The Proton acceptor role is filled by His189.

The protein belongs to the chloramphenicol acetyltransferase family. As to quaternary structure, homotrimer.

It catalyses the reaction chloramphenicol + acetyl-CoA = chloramphenicol 3-acetate + CoA. Functionally, this enzyme is an effector of chloramphenicol resistance in bacteria. This chain is Chloramphenicol acetyltransferase (cat), found in Staphylococcus aureus.